Here is a 248-residue protein sequence, read N- to C-terminus: ATP synthase subunit a, chloroplastic (248 aa).

5 consecutive transmembrane segments (helical) span residues 38-58, 96-116, 135-155, 200-220, and 221-241; these read QVLL…VLTV, VPFI…GALV, INTT…AGLA, LVVA…VMLL, and GLFT…AYIG.

This sequence belongs to the ATPase A chain family. F-type ATPases have 2 components, CF(1) - the catalytic core - and CF(0) - the membrane proton channel. CF(1) has five subunits: alpha(3), beta(3), gamma(1), delta(1), epsilon(1). CF(0) has four main subunits: a, b, b' and c.

Its subcellular location is the plastid. It is found in the chloroplast thylakoid membrane. Key component of the proton channel; it plays a direct role in the translocation of protons across the membrane. This chain is ATP synthase subunit a, chloroplastic, found in Welwitschia mirabilis (Tree tumbo).